Consider the following 145-residue polypeptide: tRNA-specific adenosine deaminase (145 aa).

The region spanning 1–116 (MREALKQAEI…SNLRYFNSKA (116 aa)) is the CMP/dCMP-type deaminase domain. His48 contributes to the Zn(2+) binding site. The active-site Proton donor is the Glu50. Zn(2+) contacts are provided by Cys78 and Cys81.

The protein belongs to the cytidine and deoxycytidylate deaminase family. As to quaternary structure, homodimer. Zn(2+) is required as a cofactor.

The enzyme catalyses adenosine(34) in tRNA + H2O + H(+) = inosine(34) in tRNA + NH4(+). Functionally, catalyzes the deamination of adenosine to inosine at the wobble position 34 of tRNA(Arg2). The polypeptide is tRNA-specific adenosine deaminase (Rickettsia bellii (strain RML369-C)).